A 147-amino-acid polypeptide reads, in one-letter code: Hemoglobin subunit beta-1 (147 aa).

The Globin domain maps to 3 to 147; it reads NLTAKERQLI…IADALGKGYH (145 aa). Heme b is bound by residues H64 and H93.

The protein belongs to the globin family. Heterotetramer of two alpha chains and two beta chains. Red blood cells.

Its function is as follows. Involved in oxygen transport from the lung to the various peripheral tissues. This chain is Hemoglobin subunit beta-1 (hbb1), found in Xenopus tropicalis (Western clawed frog).